Consider the following 170-residue polypeptide: Transmembrane protein 217B (170 aa).

Positions 1–21 (MNVRMFSLMVGIFSVLNTTQF) are cleaved as a signal peptide. Over 22-58 (FIFDLNQKTHICYEAKFSIYVDSKSELVTWTLFHRAN) the chain is Lumenal. The chain crosses the membrane as a helical span at residues 59 to 79 (ISTGLSLTTIIIGCFLFYCIH). Residues 80-85 (KNIYMG) are Cytoplasmic-facing. A helical membrane pass occupies residues 86-106 (LLIYAMWIITYELINFSIVLL). Topologically, residues 107 to 120 (LNGIIKDHFKTLSY) are lumenal. The helical transmembrane segment at 121-141 (LHWIFQISHMLLHFFCLPFIV) threads the bilayer. The Cytoplasmic segment spans residues 142 to 170 (KHAYNLYKESQTVGRKRRHRLCSTIAVNS).

It is found in the membrane. The chain is Transmembrane protein 217B from Homo sapiens (Human).